Reading from the N-terminus, the 653-residue chain is Zinc finger protein 59 (653 aa).

The 73-residue stretch at 14-86 (VTFRDVAVDF…VNEETGRPSP (73 aa)) folds into the KRAB domain. 16 consecutive C2H2-type zinc fingers follow at residues 172-194 (YECKECGKCFGCRSTLTQHQSVH), 200-222 (YECKECGKAFRLPQQLTRHQKCH), 256-278 (FACRECGKSFNRVSSLVEHGLIH), 284-306 (YECNECGKAFKRHRSFVRHQKIH), 312-334 (FQCKDCGKGFIVLAHLTRHQSSH), 340-362 (FECEECGKKFRTARHLVKHQRIH), 368-390 (FECNVCGSAFRLQLYLSEHQKTH), 396-418 (LECNVCGKAFRLQVYLSEHLKTH), 424-446 (FKCKLCGSAFPNKYQLNKHLTVH), 452-474 (YQCKECGKCFRQRSKLTEHESIH), 480-502 (FQCEECGKFFRLNTLLIHHQKSH), 508-530 (FECKECGKAFLLPSQLNSHKIVH), 536-558 (FECKVCGKSFKRESNLIQHGAVH), 564-586 (YECSECGKGFIHRSSLFHHRKIH), 592-614 (FKCQECGKAFVVLAYLIQHQSIH), and 620-642 (FECELCGSAFRCRSQLNKHLRIH).

It belongs to the krueppel C2H2-type zinc-finger protein family. In terms of tissue distribution, expressed predominantly in the testis (at protein level).

It localises to the nucleus. May have a role during differentiation processes. The protein is Zinc finger protein 59 (Zfp59) of Mus musculus (Mouse).